The sequence spans 155 residues: MLHRNPDEFLKSIPKDKRIMCLDMGEKQIGIAFSDKTQLIATAHSIYHRKNMSKDLGYLHRIFKENEAGSMVIGIPLNIDEQETKWCKTIIQFANKIIKKYKVNTYLQDESLSTSIATHTLKITGISITKSKKIDDKISACIILQRTLDKINTIK.

Belongs to the YqgF nuclease family.

It localises to the cytoplasm. Its function is as follows. Could be a nuclease involved in processing of the 5'-end of pre-16S rRNA. This Wolbachia sp. subsp. Drosophila simulans (strain wRi) protein is Putative pre-16S rRNA nuclease.